A 412-amino-acid polypeptide reads, in one-letter code: Chorismate synthase (412 aa).

Arg-40 and Arg-46 together coordinate NADP(+). FMN contacts are provided by residues Arg-135–Ser-137, Gln-256–Ala-257, Gly-300, Lys-315–Thr-319, and Arg-341. Positions Gln-391 to Ala-404 are enriched in basic and acidic residues. The disordered stretch occupies residues Gln-391–Gly-412.

It belongs to the chorismate synthase family. As to quaternary structure, homotetramer. FMNH2 is required as a cofactor.

It catalyses the reaction 5-O-(1-carboxyvinyl)-3-phosphoshikimate = chorismate + phosphate. Its pathway is metabolic intermediate biosynthesis; chorismate biosynthesis; chorismate from D-erythrose 4-phosphate and phosphoenolpyruvate: step 7/7. Its function is as follows. Catalyzes the anti-1,4-elimination of the C-3 phosphate and the C-6 proR hydrogen from 5-enolpyruvylshikimate-3-phosphate (EPSP) to yield chorismate, which is the branch point compound that serves as the starting substrate for the three terminal pathways of aromatic amino acid biosynthesis. This reaction introduces a second double bond into the aromatic ring system. The chain is Chorismate synthase from Mycobacteroides abscessus (strain ATCC 19977 / DSM 44196 / CCUG 20993 / CIP 104536 / JCM 13569 / NCTC 13031 / TMC 1543 / L948) (Mycobacterium abscessus).